A 240-amino-acid polypeptide reads, in one-letter code: Lysoplasmalogenase TMEM86A (240 aa).

The Cytoplasmic portion of the chain corresponds to 1-21 (MVSPVTVVKSEGPKLVPFFKA). A helical membrane pass occupies residues 22–42 (TCVYFVLWLPSSSPSWVSALI). Position 43 (Lys-43) is a topological domain, extracellular. Residues 44–64 (CLPIFCLWLFLLAHGLGFLLT) form a helical membrane-spanning segment. Topologically, residues 65 to 70 (HPSATR) are cytoplasmic. The helical transmembrane segment at 71 to 91 (IFVGLVFSAIGDAFLIWQDQG) threads the bilayer. A topological domain (extracellular) is located at residue Tyr-92. Residues 93-113 (FVHGMLMFAVTHMLYASAFGM) form a helical membrane-spanning segment. Over 114-115 (RP) the chain is Cytoplasmic. A helical transmembrane segment spans residues 116 to 136 (LGLRTGLLMVILSGLCYAFLY). Residues 137-138 (PN) are Extracellular-facing. The chain crosses the membrane as a helical span at residues 139-159 (LTGAFTYVVGVYVAIIGFMGW). At 160 to 174 (RAMAGLQLVGAAWRW) the chain is on the cytoplasmic side. A helical transmembrane segment spans residues 175–195 (TELAAGTGALLFIVSDLTIAL). Topologically, residues 196-206 (DKFCFPVPYSR) are extracellular. A helical membrane pass occupies residues 207 to 227 (ALIMSTYYAAQMLIALSAVES). The Cytoplasmic segment spans residues 228 to 240 (REPVEDYRLSKAK).

The protein belongs to the TMEM86 family.

The protein resides in the endoplasmic reticulum membrane. The enzyme catalyses a 1-O-(1Z-alkenyl)-sn-glycero-3-phosphocholine + H2O = a 2,3-saturated aldehyde + sn-glycerol 3-phosphocholine. It catalyses the reaction a 1-O-(1Z-alkenyl)-sn-glycero-3-phosphoethanolamine + H2O = a 2,3-saturated aldehyde + sn-glycero-3-phosphoethanolamine. Its function is as follows. Catalyzes the hydrolysis of the vinyl ether bond of choline or ethanolamine lysoplasmalogens, forming fatty aldehyde and glycerophosphocholine or glycerophosphoethanolamine, respectively and is specific for the sn-2-deacylated (lyso) form of plasmalogen. Plays an important role in lysoplasmalogen metabolism in the adipocyte tissue and macrophages. In Bos taurus (Bovine), this protein is Lysoplasmalogenase TMEM86A (TMEM86A).